Here is a 155-residue protein sequence, read N- to C-terminus: Small ribosomal subunit protein uS7cz/uS7cy (155 aa).

It belongs to the universal ribosomal protein uS7 family. As to quaternary structure, part of the 30S ribosomal subunit.

The protein localises to the plastid. Its subcellular location is the chloroplast. Functionally, one of the primary rRNA binding proteins, it binds directly to 16S rRNA where it nucleates assembly of the head domain of the 30S subunit. The chain is Small ribosomal subunit protein uS7cz/uS7cy (rps7-A) from Morus indica (Mulberry).